A 280-amino-acid chain; its full sequence is Ribosomal RNA small subunit methyltransferase A (280 aa).

The S-adenosyl-L-methionine site is built by H13, L15, G40, E61, D85, and N105.

The protein belongs to the class I-like SAM-binding methyltransferase superfamily. rRNA adenine N(6)-methyltransferase family. RsmA subfamily.

The protein localises to the cytoplasm. It carries out the reaction adenosine(1518)/adenosine(1519) in 16S rRNA + 4 S-adenosyl-L-methionine = N(6)-dimethyladenosine(1518)/N(6)-dimethyladenosine(1519) in 16S rRNA + 4 S-adenosyl-L-homocysteine + 4 H(+). Specifically dimethylates two adjacent adenosines (A1518 and A1519) in the loop of a conserved hairpin near the 3'-end of 16S rRNA in the 30S particle. May play a critical role in biogenesis of 30S subunits. The polypeptide is Ribosomal RNA small subunit methyltransferase A (Phocaeicola vulgatus (strain ATCC 8482 / DSM 1447 / JCM 5826 / CCUG 4940 / NBRC 14291 / NCTC 11154) (Bacteroides vulgatus)).